The chain runs to 328 residues: DNA-directed RNA polymerase subunit alpha (328 aa).

The segment at 1–230 (MNKIKITPSV…QSQMEIFTND (230 aa)) is alpha N-terminal domain (alpha-NTD). An alpha C-terminal domain (alpha-CTD) region spans residues 243–328 (NSEIFYQPLD…ILKKIEQNKS (86 aa)).

This sequence belongs to the RNA polymerase alpha chain family. Homodimer. The RNAP catalytic core consists of 2 alpha, 1 beta, 1 beta' and 1 omega subunit. When a sigma factor is associated with the core the holoenzyme is formed, which can initiate transcription.

It catalyses the reaction RNA(n) + a ribonucleoside 5'-triphosphate = RNA(n+1) + diphosphate. Its function is as follows. DNA-dependent RNA polymerase catalyzes the transcription of DNA into RNA using the four ribonucleoside triphosphates as substrates. This chain is DNA-directed RNA polymerase subunit alpha, found in Nitratiruptor sp. (strain SB155-2).